The chain runs to 388 residues: Staphopain A (388 aa).

An N-terminal signal peptide occupies residues 1–25; that stretch reads MKRNFPKLIALSLIFSLSVTPIANA. Residues 26–214 constitute a propeptide that is removed on maturation; it reads ESNSNIKAKD…TSQFKSNNYT (189 aa). Catalysis depends on residues C238, H334, and N355.

The protein belongs to the peptidase C47 family. In the cytoplasm, prematurely activated/folded ScpA forms a stable non-covalent complex with ScpB. In terms of processing, cleavage leads to the activation of ScpA probably by an auto-catalytic manner.

Its subcellular location is the secreted. It carries out the reaction Broad endopeptidase action on proteins including elastin, but rather limited hydrolysis of small-molecule substrates. Assays are conveniently made with hemoglobin, casein or Z-Phe-Arg-NHMec as substrate.. With respect to regulation, prematurely activated/folded staphopain A is inhibited by staphostatin A (ScpB), which is probably required to protect staphylococcal cytoplasmic proteins from degradation by ScpA. Functionally, cysteine protease that plays an important role in the inhibition of host innate immune response. Cleaves host elastins found in connective tissues, pulmonary surfactant protein A in the lungs, and the chemokine receptor CXCR2 on leukocytes. Proteolytic cleavage of surfactant protein A impairs bacterial phagocytosis by neutrophils while CXCR2 degradation blocks neutrophil activation and chemotaxis. Additionally, promotes vascular leakage by activating the plasma kallikerin/kinin system, resulting in hypotension. This Staphylococcus aureus (strain COL) protein is Staphopain A (sspP).